A 151-amino-acid polypeptide reads, in one-letter code: Large ribosomal subunit protein bL9 (151 aa).

Belongs to the bacterial ribosomal protein bL9 family.

Functionally, binds to the 23S rRNA. The chain is Large ribosomal subunit protein bL9 from Nitrosospira multiformis (strain ATCC 25196 / NCIMB 11849 / C 71).